The chain runs to 214 residues: Membrane antigen containing repeating peptides (214 aa).

Tandem repeats lie at residues 1–14, 15–28, 29–42, and 43–56. Positions 1–31 are disordered; it reads QETSAKLADTEETLQETSAKLADTEETLQET. Residues 1-56 are 4 X 14 AA tandem repeats; sequence QETSAKLADTEETLQETSAKLADTEETLQETSAKLADTEETLQETSAKLADTEETL. Residues 180 to 214 form a disordered region; sequence CSLHPTPRRLGDVSNRENSIENKTRSASRLSGRLF. Basic and acidic residues predominate over residues 188 to 203; it reads RLGDVSNRENSIENKT.

It is found in the membrane. In Leishmania major, this protein is Membrane antigen containing repeating peptides.